Reading from the N-terminus, the 554-residue chain is Thermosome subunit alpha (554 aa).

The segment at 530-554 (PKKKEKKGKTGEEEEEEGGGSKFEF) is disordered.

It belongs to the TCP-1 chaperonin family. In terms of assembly, forms a Heterooligomeric complex of two stacked eight-membered rings.

Molecular chaperone; binds unfolded polypeptides in vitro, and has a weak ATPase activity. The chain is Thermosome subunit alpha (thsA) from Aeropyrum pernix (strain ATCC 700893 / DSM 11879 / JCM 9820 / NBRC 100138 / K1).